We begin with the raw amino-acid sequence, 264 residues long: Thymidylate synthase (264 aa).

A dUMP-binding site is contributed by Arg-21. His-51 serves as a coordination point for (6R)-5,10-methylene-5,6,7,8-tetrahydrofolate. DUMP is bound at residue 126–127 (RR). The active-site Nucleophile is Cys-146. DUMP contacts are provided by residues 166-169 (RSCD), Asn-177, and 207-209 (HLY). Asp-169 contributes to the (6R)-5,10-methylene-5,6,7,8-tetrahydrofolate binding site. Ala-263 provides a ligand contact to (6R)-5,10-methylene-5,6,7,8-tetrahydrofolate.

It belongs to the thymidylate synthase family. Bacterial-type ThyA subfamily. In terms of assembly, homodimer.

The protein resides in the cytoplasm. It catalyses the reaction dUMP + (6R)-5,10-methylene-5,6,7,8-tetrahydrofolate = 7,8-dihydrofolate + dTMP. It participates in pyrimidine metabolism; dTTP biosynthesis. Catalyzes the reductive methylation of 2'-deoxyuridine-5'-monophosphate (dUMP) to 2'-deoxythymidine-5'-monophosphate (dTMP) while utilizing 5,10-methylenetetrahydrofolate (mTHF) as the methyl donor and reductant in the reaction, yielding dihydrofolate (DHF) as a by-product. This enzymatic reaction provides an intracellular de novo source of dTMP, an essential precursor for DNA biosynthesis. In Photorhabdus laumondii subsp. laumondii (strain DSM 15139 / CIP 105565 / TT01) (Photorhabdus luminescens subsp. laumondii), this protein is Thymidylate synthase.